A 106-amino-acid chain; its full sequence is MNEYHNSLKSKESVKDERQQKLQPPSMYQVILNNDDYTPMEFVVDVLRKFFSYDIERATQLMLDVHYQGKAVCGVYTAEVAETKAAQVNMYAKEYGHPLLCTLEKV.

Positions 1–22 are disordered; the sequence is MNEYHNSLKSKESVKDERQQKL. Positions 9-20 are enriched in basic and acidic residues; that stretch reads KSKESVKDERQQ.

Belongs to the ClpS family. Binds to the N-terminal domain of the chaperone ClpA.

In terms of biological role, involved in the modulation of the specificity of the ClpAP-mediated ATP-dependent protein degradation. This is ATP-dependent Clp protease adapter protein ClpS from Photorhabdus laumondii subsp. laumondii (strain DSM 15139 / CIP 105565 / TT01) (Photorhabdus luminescens subsp. laumondii).